The primary structure comprises 212 residues: MNVFRLSGDLCHLAAIIILLLKIWNSRSCAGISGKSQLLFAMVFTTRYLDLFTSFISLYNTSMKVIYMGCAYATVYLIYMKFKATYDGNHDTFRVEFLVVPVGGLSVLVNHDFSPLEILWTFSIYLESVAILPQLFMISKTGEAETITTHYLFFLGLYRALYLFNWIWRFSFEGFFDLIAIVAGVVQTILYCDFFYLYVTKVLKGKKLSLPA.

Residues 1 to 4 (MNVF) lie on the Lumenal side of the membrane. The chain crosses the membrane as a helical span at residues 5-24 (RLSGDLCHLAAIIILLLKIW). At 25–32 (NSRSCAGI) the chain is on the cytoplasmic side. The helical transmembrane segment at 33-52 (SGKSQLLFAMVFTTRYLDLF) threads the bilayer. The interaction with the K-D-E-L motif on target proteins stretch occupies residues 47 to 48 (RY). Residues 53 to 58 (TSFISL) lie on the Lumenal side of the membrane. Residues 59 to 79 (YNTSMKVIYMGCAYATVYLIY) traverse the membrane as a helical segment. At 80–92 (MKFKATYDGNHDT) the chain is on the cytoplasmic side. Residues 93–110 (FRVEFLVVPVGGLSVLVN) form a helical membrane-spanning segment. Over 111 to 116 (HDFSPL) the chain is Lumenal. Residues 117-135 (EILWTFSIYLESVAILPQL) form a helical membrane-spanning segment. Topologically, residues 136–149 (FMISKTGEAETITT) are cytoplasmic. A helical transmembrane segment spans residues 150 to 168 (HYLFFLGLYRALYLFNWIW). Positions 159–169 (RALYLFNWIWR) are interaction with the K-D-E-L motif on target proteins. Residues 169–178 (RFSFEGFFDL) lie on the Lumenal side of the membrane. The chain crosses the membrane as a helical span at residues 179 to 199 (IAIVAGVVQTILYCDFFYLYV). The Cytoplasmic segment spans residues 200 to 212 (TKVLKGKKLSLPA). Positions 204 to 207 (KGKK) are important for recycling of cargo proteins with the sequence motif K-D-E-L from the Golgi to the endoplasmic reticulum.

Belongs to the ERD2 family.

Its subcellular location is the endoplasmic reticulum membrane. The protein localises to the golgi apparatus membrane. The protein resides in the cytoplasmic vesicle. It is found in the COPI-coated vesicle membrane. Its function is as follows. Receptor for the C-terminal sequence motif K-D-E-L that is present on endoplasmic reticulum resident proteins and that mediates their recycling from the Golgi back to the endoplasmic reticulum. Binding is pH dependent, and is optimal at pH 5-5.4. The chain is ER lumen protein-retaining receptor 2 (kdelr2) from Xenopus laevis (African clawed frog).